The sequence spans 459 residues: Cysteine--tRNA ligase (459 aa).

Cys-28 provides a ligand contact to Zn(2+). The 'HIGH' region motif lies at 30-40 (VTIYDLCHIGH). Cys-209, His-234, and Glu-238 together coordinate Zn(2+). The 'KMSKS' region motif lies at 266 to 270 (KMSKS). Lys-269 provides a ligand contact to ATP.

Belongs to the class-I aminoacyl-tRNA synthetase family. As to quaternary structure, monomer. It depends on Zn(2+) as a cofactor.

Its subcellular location is the cytoplasm. It carries out the reaction tRNA(Cys) + L-cysteine + ATP = L-cysteinyl-tRNA(Cys) + AMP + diphosphate. The protein is Cysteine--tRNA ligase of Shewanella pealeana (strain ATCC 700345 / ANG-SQ1).